We begin with the raw amino-acid sequence, 207 residues long: Large ribosomal subunit protein uL4 (207 aa).

Residues 48–89 (SHKVKNRSEVRGGGRKPWRQKGTGRARQGSIRSPQWRGGGVV) form a disordered region. Positions 60 to 71 (GGRKPWRQKGTG) are enriched in basic residues.

It belongs to the universal ribosomal protein uL4 family. In terms of assembly, part of the 50S ribosomal subunit.

One of the primary rRNA binding proteins, this protein initially binds near the 5'-end of the 23S rRNA. It is important during the early stages of 50S assembly. It makes multiple contacts with different domains of the 23S rRNA in the assembled 50S subunit and ribosome. Functionally, forms part of the polypeptide exit tunnel. The chain is Large ribosomal subunit protein uL4 from Bacillus velezensis (strain DSM 23117 / BGSC 10A6 / LMG 26770 / FZB42) (Bacillus amyloliquefaciens subsp. plantarum).